A 147-amino-acid chain; its full sequence is UPF0178 protein Patl_1318 (147 aa).

Belongs to the UPF0178 family.

The polypeptide is UPF0178 protein Patl_1318 (Pseudoalteromonas atlantica (strain T6c / ATCC BAA-1087)).